The sequence spans 111 residues: Transcription factor S (111 aa).

Zn(2+) is bound by residues C4, C7, C24, C27, C72, C75, C100, and C103. A C4-type zinc finger spans residues 4-27; sequence CPKCGSMMMPRKENGKTVYKCSKC. Residues 68–108 form a TFIIS-type zinc finger; that stretch reads RGISCPSCGNDEAYFWILQTRSADEPATRFYKCTKCGKVWR.

The protein belongs to the archaeal RpoM/eukaryotic RPA12/RPB9/RPC11 RNA polymerase family.

Induces RNA cleavage activity in the RNA polymerase. In its presence, the cleavage activity of the RNA polymerase truncates the RNA back to position +15 in a stepwise manner by releasing mainly dinucleotides from the 3'-end of the nascent RNA. The truncated RNAs are able to continue elongation. Involved in transcriptional proofreading and fidelity. Misincorporation of nucleotides during elongation of transcription leads to arrested elongation complexes which are rescued by TFS-promoted removal of a dinucleotide from the 3'-end. TFS is able to induce a cleavage resynthesis cycle in stalled elongation complexes (resulting from the next missing nucleotide or a reduced incorporation rate of a wrong nucleotide) preventing misincorporation and enabling proofreading in a post-incorporation manner. Pausing of elongation complexes is the main determinant of TFS-induced RNA cleavage. The protein is Transcription factor S of Sulfolobus acidocaldarius (strain ATCC 33909 / DSM 639 / JCM 8929 / NBRC 15157 / NCIMB 11770).